The sequence spans 359 residues: Trans-enoyl reductase RAP1 (359 aa).

An NADP(+)-binding site is contributed by 49 to 52 (CDFK). 137–144 (TCIATACM) lines the substrate pocket. NADP(+)-binding positions include 195–198 (SPKN), tyrosine 213, and 260–261 (LE). A substrate-binding site is contributed by 281 to 285 (GQMIL). 350–351 (VA) contacts NADP(+).

It belongs to the zinc-containing alcohol dehydrogenase family. Monomer.

It functions in the pathway secondary metabolite biosynthesis. In terms of biological role, trans-enoyl reductase; part of the gene cluster that mediates the biosynthesis of a tyrosine-derived cytochalasan acting as a fungal signal recognized by resistant rice plants and leads to avirulence in Pi33 resistant rice cultivars. The first step in the pathway is catalyzed by the hybrid PKS-NRPS ACE1, assisted by the enoyl reductase RAP1, that are responsible for fusion of the tyrosine precursor and the polyketide backbone. The polyketide synthase module (PKS) of ACE1 is responsible for the synthesis of the polyketide backbone and the downstream nonribosomal peptide synthetase (NRPS) amidates the carboxyl end of the polyketide with the tyrosine precursor. Because ACE1 lacks a designated enoylreductase (ER) domain, the required activity is provided the enoyl reductase RAP1. Reduction by the hydrolyase ORFZ, followed by dehydration and intra-molecular Diels-Alder cyclization by the Diels-Alderase ORF3 then yield the required isoindolone-fused macrocycle. A number of oxidative steps catalyzed by the tailoring enzymes identified within the cluster, including cytochrome P450 monooxygenases CYP1 to CYP4, the FAD-linked oxidoreductase OXR2 and the short-chain dehydrogenase/reductase OXR1, are further required to afford the final cytochalasans that confer avirulence and which have still to be identified. The monooxygenase CYP1 has been shown to be a site-selective C-18 hydroxylase whereas the function of CYP3 is the site-selective epoxidation of the C-6/C-7 olefin that is present in some intermediate compounds. Finally, SYN2 and RAP2 are not required for avirulence in Pi33 resistant rice cultivars. This is Trans-enoyl reductase RAP1 from Pyricularia oryzae (strain 70-15 / ATCC MYA-4617 / FGSC 8958) (Rice blast fungus).